The primary structure comprises 694 residues: Elongation factor G (694 aa).

The tr-type G domain maps to 10-285; that stretch reads EKTRNIGIMA…AVLDYLPSPV (276 aa). GTP contacts are provided by residues 19-26, 83-87, and 137-140; these read AHIDAGKT, DTPGH, and NKMD.

It belongs to the TRAFAC class translation factor GTPase superfamily. Classic translation factor GTPase family. EF-G/EF-2 subfamily.

Its subcellular location is the cytoplasm. Catalyzes the GTP-dependent ribosomal translocation step during translation elongation. During this step, the ribosome changes from the pre-translocational (PRE) to the post-translocational (POST) state as the newly formed A-site-bound peptidyl-tRNA and P-site-bound deacylated tRNA move to the P and E sites, respectively. Catalyzes the coordinated movement of the two tRNA molecules, the mRNA and conformational changes in the ribosome. This Limosilactobacillus fermentum (strain NBRC 3956 / LMG 18251) (Lactobacillus fermentum) protein is Elongation factor G.